The following is a 156-amino-acid chain: Transcription elongation factor GreA (156 aa).

A coiled-coil region spans residues 46 to 66 (AEYHAAREKQSFVEGRIKELE).

This sequence belongs to the GreA/GreB family.

Functionally, necessary for efficient RNA polymerase transcription elongation past template-encoded arresting sites. The arresting sites in DNA have the property of trapping a certain fraction of elongating RNA polymerases that pass through, resulting in locked ternary complexes. Cleavage of the nascent transcript by cleavage factors such as GreA or GreB allows the resumption of elongation from the new 3'terminus. GreA releases sequences of 2 to 3 nucleotides. The protein is Transcription elongation factor GreA of Paracoccus denitrificans (strain Pd 1222).